The sequence spans 652 residues: DNA ligase (652 aa).

NAD(+) contacts are provided by residues 29–33 (DSEYD), 78–79 (SL), and Glu-107. Lys-109 serves as the catalytic N6-AMP-lysine intermediate. The NAD(+) site is built by Arg-130, Glu-164, Lys-278, and Lys-302. Zn(2+) contacts are provided by Cys-395, Cys-398, Cys-413, and Cys-418. Positions 577-652 (DQQAALFGLT…IEDEDWLLNL (76 aa)) constitute a BRCT domain.

The protein belongs to the NAD-dependent DNA ligase family. LigA subfamily. Requires Mg(2+) as cofactor. Mn(2+) is required as a cofactor.

The catalysed reaction is NAD(+) + (deoxyribonucleotide)n-3'-hydroxyl + 5'-phospho-(deoxyribonucleotide)m = (deoxyribonucleotide)n+m + AMP + beta-nicotinamide D-nucleotide.. Its function is as follows. DNA ligase that catalyzes the formation of phosphodiester linkages between 5'-phosphoryl and 3'-hydroxyl groups in double-stranded DNA using NAD as a coenzyme and as the energy source for the reaction. It is essential for DNA replication and repair of damaged DNA. The chain is DNA ligase from Streptococcus equi subsp. equi (strain 4047).